The primary structure comprises 217 residues: Pyrophosphatase PpaX (217 aa).

Asp-11 functions as the Nucleophile in the catalytic mechanism.

The protein belongs to the HAD-like hydrolase superfamily. PpaX family. Mg(2+) serves as cofactor.

It catalyses the reaction diphosphate + H2O = 2 phosphate + H(+). In terms of biological role, hydrolyzes pyrophosphate formed during P-Ser-HPr dephosphorylation by HPrK/P. Might play a role in controlling the intracellular pyrophosphate pool. The protein is Pyrophosphatase PpaX of Listeria innocua serovar 6a (strain ATCC BAA-680 / CLIP 11262).